The sequence spans 1925 residues: Cilia- and flagella-associated protein 65 (1925 aa).

Residues 188 to 208 (FFTVIPQPIFLSPGITLTLPI) traverse the membrane as a helical segment. The 110-residue stretch at 877 to 986 (QLKLDTHKSL…THYMLRLVGV (110 aa)) folds into the MSP domain. Positions 1525 to 1550 (SQQLMRQYHKELQEWKDEKVRQEVEF) form a coiled coil. Disordered stretches follow at residues 1645-1667 (KRKA…WGPV) and 1736-1823 (SSWE…PESQ). Basic and acidic residues-rich tracts occupy residues 1649 to 1661 (PREE…EKSP) and 1739 to 1762 (EDGK…KKEE). Positions 1763 to 1804 (GEEEKGEEEEEELEEEEEEEEETEEEELGKEEIEEKEEERDE) are enriched in acidic residues.

This sequence belongs to the CFAP65 family. In terms of assembly, interacts with CFAP47.

The protein localises to the cell projection. It is found in the cilium. The protein resides in the flagellum membrane. Its subcellular location is the cytoplasmic vesicle. It localises to the secretory vesicle. The protein localises to the acrosome membrane. It is found in the cytoplasm. In terms of biological role, plays a role in flagellar formation and sperm motility. This chain is Cilia- and flagella-associated protein 65, found in Homo sapiens (Human).